The primary structure comprises 244 residues: LexA repressor (244 aa).

The tract at residues 1–24 is disordered; sequence MSDSSDTTVDGASDGASDGASGAD. The span at 10 to 24 shows a compositional bias: low complexity; it reads DGASDGASDGASGAD. The H-T-H motif DNA-binding region spans 58–78; the sequence is IREIGDAVGLTSTSSVAHQLR. Catalysis depends on for autocatalytic cleavage activity residues Ser168 and Lys205.

This sequence belongs to the peptidase S24 family. In terms of assembly, homodimer.

The catalysed reaction is Hydrolysis of Ala-|-Gly bond in repressor LexA.. Functionally, represses a number of genes involved in the response to DNA damage (SOS response), including recA and lexA. In the presence of single-stranded DNA, RecA interacts with LexA causing an autocatalytic cleavage which disrupts the DNA-binding part of LexA, leading to derepression of the SOS regulon and eventually DNA repair. In Mycobacterium ulcerans (strain Agy99), this protein is LexA repressor.